The following is a 71-amino-acid chain: Protein SlyX homolog (71 aa).

The protein belongs to the SlyX family.

This chain is Protein SlyX homolog, found in Rhodospirillum rubrum (strain ATCC 11170 / ATH 1.1.1 / DSM 467 / LMG 4362 / NCIMB 8255 / S1).